Here is a 91-residue protein sequence, read N- to C-terminus: Potassium channel toxin TstKMK (91 aa).

Residues 1-25 (MVATNRCCVFALLFALLLVHSLTEA) form the signal peptide. Positions 26 to 42 (GKGKEILGKIKEKIIEA) are excised as a propeptide. The region spanning 58-91 (EYACPAIDKFCEDHCAAKKAVGKCDDFKCKCIKL) is the BetaSPN-type CS-alpha/beta domain. Disulfide bonds link cysteine 61–cysteine 81, cysteine 68–cysteine 86, and cysteine 72–cysteine 88.

The protein belongs to the long chain scorpion toxin family. Class 2 subfamily. As to expression, expressed by the venom gland.

It is found in the secreted. Functionally, the full peptide presents antibacterial and cytotoxic activities. The synthetic C-terminus (AA 33-76) inhibits voltage-gated potassium channels Kv1.1/KCNA1, Kv1.2/KCNA2, and Kv1.3/KCNA3. The protein is Potassium channel toxin TstKMK of Tityus stigmurus (Brazilian scorpion).